Reading from the N-terminus, the 773-residue chain is Pentatricopeptide repeat-containing protein At1g76280 (773 aa).

11 PPR repeats span residues 130–165 (DSRSLLFIVKSLCNGGHLDKASEFIHAVREDDRISP), 166–200 (LLPIYNFFLGACARTRSVYHASKCLELMDQRRVGK), 201–231 (NGITYVALLKLAVFQRNLSTVNDIWKHYVNH), 235–269 (DILSLRRFIWSFTRLGDLKSAYELLQHMVYLALRG), 332–369 (LRWSFNDVIHACGQSKNSELAEQLMLQLKVMQQQNLKP), 370–400 (YDSTLATVAAYCSKALQVDLAEHLLDQISEC), 402–436 (YSYPFNNLLAAYDSLDQPERAVRVLARMKELKLRP), 524–558 (GTPTYNIVLHSLLEANETDMVINIFKRMKSCGCPA), 559–593 (DVATYNIMIDCCSLIHSYKSACALVSMMIRDGFSP), 594–628 (KAVTFTALMKILLNDANFEEALNLLDQAALEEIHL), and 629–663 (DVLSYNTILRKAFEKGMIDVIEYIVEQMHREKVNP).

This sequence belongs to the PPR family. P subfamily.

The polypeptide is Pentatricopeptide repeat-containing protein At1g76280 (Arabidopsis thaliana (Mouse-ear cress)).